The chain runs to 369 residues: Protein FAM187B (369 aa).

The first 17 residues, 1–17 (MPPMLWLLLNFAAPALG), serve as a signal peptide directing secretion. At 18–333 (FYFSISCPSG…PGRADSVLKG (316 aa)) the chain is on the extracellular side. 3 N-linked (GlcNAc...) asparagine glycosylation sites follow: Asn-45, Asn-68, and Asn-130. Residues 334 to 354 (LKLVLLVGTVLVLLGALLKFI) traverse the membrane as a helical segment. Over 355–369 (RPSPGKRSKQVLMVK) the chain is Cytoplasmic.

This sequence belongs to the FAM187 family.

It is found in the membrane. This Macaca fascicularis (Crab-eating macaque) protein is Protein FAM187B (FAM187B).